Consider the following 456-residue polypeptide: Glutathione reductase (456 aa).

FAD contacts are provided by Ser-14, Gly-15, Glu-34, Thr-41, Cys-42, and Lys-50. Ser-14 lines the glutathione pocket. A disulfide bridge links Cys-42 with Cys-47. Tyr-99 is a binding site for glutathione. Residue Gly-115 participates in FAD binding. 6 residues coordinate NADP(+): Ala-180, Ile-183, Glu-186, Arg-203, Arg-209, and Gly-267. Asp-308 is an FAD binding site. Glu-315 contacts NADP(+). Thr-317 is a binding site for FAD. Arg-325 is a glutathione binding site. Position 348 (Val-348) interacts with NADP(+). Position 445 (His-445) interacts with FAD. Residue His-445 is the Proton acceptor of the active site.

Belongs to the class-I pyridine nucleotide-disulfide oxidoreductase family. As to quaternary structure, homodimer. FAD serves as cofactor.

Its subcellular location is the cytoplasm. It catalyses the reaction 2 glutathione + NADP(+) = glutathione disulfide + NADPH + H(+). Its function is as follows. Catalyzes the reduction of glutathione disulfide (GSSG) to reduced glutathione (GSH). Constitutes the major mechanism to maintain a high GSH:GSSG ratio in the cytosol. In Haemophilus influenzae (strain ATCC 51907 / DSM 11121 / KW20 / Rd), this protein is Glutathione reductase (gor).